The following is a 249-amino-acid chain: DNA repair protein RecO (249 aa).

It belongs to the RecO family.

In terms of biological role, involved in DNA repair and RecF pathway recombination. The chain is DNA repair protein RecO from Lactobacillus delbrueckii subsp. bulgaricus (strain ATCC BAA-365 / Lb-18).